Here is a 101-residue protein sequence, read N- to C-terminus: Small ribosomal subunit protein uS14 (101 aa).

A disordered region spans residues 32–67 (SDAKRSDEEREAARLGLQKLPRNANPTRQRNRCEIT). Basic and acidic residues predominate over residues 33 to 44 (DAKRSDEEREAA).

This sequence belongs to the universal ribosomal protein uS14 family. In terms of assembly, part of the 30S ribosomal subunit. Contacts proteins S3 and S10.

Its function is as follows. Binds 16S rRNA, required for the assembly of 30S particles and may also be responsible for determining the conformation of the 16S rRNA at the A site. The sequence is that of Small ribosomal subunit protein uS14 from Paracidovorax citrulli (strain AAC00-1) (Acidovorax citrulli).